We begin with the raw amino-acid sequence, 236 residues long: Uridylate kinase (236 aa).

Residue 10–13 (KLSG) coordinates ATP. Position 52 (Gly-52) interacts with UMP. ATP-binding residues include Gly-53 and Arg-57. Residues Asp-72 and 133–140 (TGNPFFTT) each bind UMP. ATP contacts are provided by Thr-160, Tyr-166, and Asp-169.

The protein belongs to the UMP kinase family. Homohexamer.

It localises to the cytoplasm. The enzyme catalyses UMP + ATP = UDP + ADP. The protein operates within pyrimidine metabolism; CTP biosynthesis via de novo pathway; UDP from UMP (UMPK route): step 1/1. Inhibited by UTP. In terms of biological role, catalyzes the reversible phosphorylation of UMP to UDP. The protein is Uridylate kinase of Bacteroides thetaiotaomicron (strain ATCC 29148 / DSM 2079 / JCM 5827 / CCUG 10774 / NCTC 10582 / VPI-5482 / E50).